The sequence spans 419 residues: Divinyl chlorophyllide a 8-vinyl-reductase, chloroplastic (419 aa).

Residues 1–71 (MSICSTVGAG…PIVVSSTPVV (71 aa)) constitute a chloroplast transit peptide.

Its subcellular location is the plastid. The protein resides in the chloroplast. It carries out the reaction protochlorophyllide a + NADP(+) = 3,8-divinyl protochlorophyllide a + NADPH + H(+). It participates in porphyrin-containing compound metabolism; chlorophyll biosynthesis. In terms of biological role, catalyzes the conversion of divinyl chlorophyllide to monovinyl chlorophyllide. Reduces the 8-vinyl group of the tetrapyrrole to an ethyl group using NADPH as the reductant. The best substrate is (3,8-divinyl)-chlorophyllide a (DV-Chlidea). Very low activity with (3,8-divinyl)-protochlorophyllide a (DV-Pchlidea) and (3,8-divinyl)-magnesium-protoporphyrin IX monomethyl ester (DV-MPE). No activity with (3,8-divinyl)-magnesium-protoporphyrin IX (DV-Mg-Proto) and (3,8-divinyl)-chlorophyll a (DV-Chla). This is Divinyl chlorophyllide a 8-vinyl-reductase, chloroplastic (DVR) from Cucumis sativus (Cucumber).